A 330-amino-acid chain; its full sequence is ADP-L-glycero-D-manno-heptose-6-epimerase (330 aa).

Residues 11–12 (FI), 32–33 (DN), K39, K54, 75–79 (EGACS), and N92 each bind NADP(+). The active-site Proton acceptor is the Y139. Position 143 (K143) interacts with NADP(+). Residue N168 participates in substrate binding. V169 and K177 together coordinate NADP(+). The Proton acceptor role is filled by K177. Residues R179, H186, 200–203 (FGEY), R213, and Y292 each bind substrate.

This sequence belongs to the NAD(P)-dependent epimerase/dehydratase family. HldD subfamily. In terms of assembly, homopentamer. The cofactor is NADP(+).

It catalyses the reaction ADP-D-glycero-beta-D-manno-heptose = ADP-L-glycero-beta-D-manno-heptose. Its pathway is nucleotide-sugar biosynthesis; ADP-L-glycero-beta-D-manno-heptose biosynthesis; ADP-L-glycero-beta-D-manno-heptose from D-glycero-beta-D-manno-heptose 7-phosphate: step 4/4. Catalyzes the interconversion between ADP-D-glycero-beta-D-manno-heptose and ADP-L-glycero-beta-D-manno-heptose via an epimerization at carbon 6 of the heptose. In Burkholderia cenocepacia (strain ATCC BAA-245 / DSM 16553 / LMG 16656 / NCTC 13227 / J2315 / CF5610) (Burkholderia cepacia (strain J2315)), this protein is ADP-L-glycero-D-manno-heptose-6-epimerase.